Here is a 363-residue protein sequence, read N- to C-terminus: Probable L-tyrosine/L-aspartate decarboxylase (363 aa).

N6-(pyridoxal phosphate)lysine is present on K208.

Belongs to the group II decarboxylase family. MfnA subfamily. Requires pyridoxal 5'-phosphate as cofactor.

It catalyses the reaction L-tyrosine + H(+) = tyramine + CO2. It carries out the reaction L-aspartate + H(+) = beta-alanine + CO2. It participates in cofactor biosynthesis; methanofuran biosynthesis. Its pathway is cofactor biosynthesis; coenzyme A biosynthesis. Catalyzes the decarboxylation of L-tyrosine to produce tyramine for methanofuran biosynthesis. Can also catalyze the decarboxylation of L-aspartate to produce beta-alanine for coenzyme A (CoA) biosynthesis. The chain is Probable L-tyrosine/L-aspartate decarboxylase from Methanothermobacter thermautotrophicus (strain ATCC 29096 / DSM 1053 / JCM 10044 / NBRC 100330 / Delta H) (Methanobacterium thermoautotrophicum).